The chain runs to 189 residues: Adenylate kinase (189 aa).

11 to 16 (GSGKGT) contributes to the ATP binding site. Positions 31–60 (STGDVLRAEIKNGTELGKTAKGYIDQGQLI) are NMP. AMP-binding positions include T32, R37, 58–60 (QLI), 86–89 (GFPR), and Q93. The LID stretch occupies residues 127–137 (KRGKESGRADD). R128 is an ATP binding site. AMP-binding residues include R134 and R145. G173 provides a ligand contact to ATP.

The protein belongs to the adenylate kinase family. As to quaternary structure, monomer.

It localises to the cytoplasm. It carries out the reaction AMP + ATP = 2 ADP. Its pathway is purine metabolism; AMP biosynthesis via salvage pathway; AMP from ADP: step 1/1. Its function is as follows. Catalyzes the reversible transfer of the terminal phosphate group between ATP and AMP. Plays an important role in cellular energy homeostasis and in adenine nucleotide metabolism. The sequence is that of Adenylate kinase from Bacteroides fragilis (strain ATCC 25285 / DSM 2151 / CCUG 4856 / JCM 11019 / LMG 10263 / NCTC 9343 / Onslow / VPI 2553 / EN-2).